We begin with the raw amino-acid sequence, 257 residues long: tRNA pseudouridine synthase A (257 aa).

Residue Asp-57 is the Nucleophile of the active site. Tyr-115 is a substrate binding site.

It belongs to the tRNA pseudouridine synthase TruA family. Homodimer.

The enzyme catalyses uridine(38/39/40) in tRNA = pseudouridine(38/39/40) in tRNA. Functionally, formation of pseudouridine at positions 38, 39 and 40 in the anticodon stem and loop of transfer RNAs. This is tRNA pseudouridine synthase A from Lawsonia intracellularis (strain PHE/MN1-00).